The sequence spans 243 residues: 1-(5-phosphoribosyl)-5-[(5-phosphoribosylamino)methylideneamino] imidazole-4-carboxamide isomerase (243 aa).

Asp8 functions as the Proton acceptor in the catalytic mechanism. Catalysis depends on Asp130, which acts as the Proton donor.

Belongs to the HisA/HisF family.

The protein localises to the cytoplasm. The enzyme catalyses 1-(5-phospho-beta-D-ribosyl)-5-[(5-phospho-beta-D-ribosylamino)methylideneamino]imidazole-4-carboxamide = 5-[(5-phospho-1-deoxy-D-ribulos-1-ylimino)methylamino]-1-(5-phospho-beta-D-ribosyl)imidazole-4-carboxamide. The protein operates within amino-acid biosynthesis; L-histidine biosynthesis; L-histidine from 5-phospho-alpha-D-ribose 1-diphosphate: step 4/9. The protein is 1-(5-phosphoribosyl)-5-[(5-phosphoribosylamino)methylideneamino] imidazole-4-carboxamide isomerase of Ruthia magnifica subsp. Calyptogena magnifica.